A 278-amino-acid chain; its full sequence is Putative B3 domain-containing protein At2g21920 (278 aa).

The TF-B3 DNA-binding region spans 168–275; it reads ISKTLSRTDV…KFIILNFEYN (108 aa).

It is found in the nucleus. The protein is Putative B3 domain-containing protein At2g21920 of Arabidopsis thaliana (Mouse-ear cress).